The chain runs to 220 residues: Putative cobalt transport protein CbiM (220 aa).

A run of 5 helical transmembrane segments spans residues Gly-6–Tyr-26, Ala-43–Val-63, Gly-74–Leu-94, Leu-98–Ile-118, and Ile-182–Ile-202.

It belongs to the CbiM family. Forms an energy-coupling factor (ECF) transporter complex composed of an ATP-binding protein (A component, CbiO), a transmembrane protein (T component, CbiQ) and 2 possible substrate-capture proteins (S components, CbiM and CbiN) of unknown stoichimetry.

Its subcellular location is the cell membrane. It functions in the pathway cofactor biosynthesis; adenosylcobalamin biosynthesis. Functionally, part of the energy-coupling factor (ECF) transporter complex CbiMNOQ involved in cobalt import. The polypeptide is Putative cobalt transport protein CbiM (Haloquadratum walsbyi (strain DSM 16790 / HBSQ001)).